An 898-amino-acid chain; its full sequence is Pyruvate, phosphate dikinase (898 aa).

Positions 1 to 355 are N-terminal; it reads MAKWVYTFGA…LWMLQTRSGK (355 aa). Residue arginine 96 participates in ATP binding. The linker 1 stretch occupies residues 356-412; the sequence is RTAKSALKIAVDMAEEGLISKEEAVARIDPASLDQLLHPTIDPHARRDIIGSGLPAS. The central stretch occupies residues 413–511; that stretch reads PGAATGEIVF…TLRKGDVITI (99 aa). Residue threonine 466 is modified to Phosphothreonine; by PDRP1. Histidine 468 acts as the Tele-phosphohistidine intermediate in catalysis. The tract at residues 512 to 546 is linker 2; sequence DGSSGQVLKGEIPMLQPELSGDFGKIMQWADASRR. Residues 547-898 are C-terminal; it reads MTVRTNAETP…VAEVQALAAS (352 aa). Substrate-binding residues include arginine 574, arginine 630, glutamate 758, glycine 779, threonine 780, asparagine 781, and aspartate 782. A Mg(2+)-binding site is contributed by glutamate 758. Residue aspartate 782 participates in Mg(2+) binding. The active-site Proton donor is cysteine 844.

Belongs to the PEP-utilizing enzyme family. Homodimer. The cofactor is Mg(2+). Phosphorylation of Thr-466 in the dark inactivates the enzyme. Dephosphorylation upon light stimulation reactivates the enzyme.

The enzyme catalyses pyruvate + phosphate + ATP = phosphoenolpyruvate + AMP + diphosphate + H(+). Its activity is regulated as follows. Activated by light-induced dephosphorylation. Inhibited by dark-induced phosphorylation. Both reactions are catalyzed by PDRP1. Catalyzes the reversible phosphorylation of pyruvate and phosphate. The polypeptide is Pyruvate, phosphate dikinase (ppdK) (Rhizobium meliloti (strain 1021) (Ensifer meliloti)).